The sequence spans 622 residues: Membrane protein insertase YidC (622 aa).

The helical transmembrane segment at 6–26 threads the bilayer; sequence IVLLIIFSTSLLFLWDAWVKE. The disordered stretch occupies residues 47–87; sequence TQSKNNDGLPIPGSELTASQTGSDLNGIPSSGDTADSVTPR. Residues 62–83 are compositionally biased toward polar residues; the sequence is LTASQTGSDLNGIPSSGDTADS. The next 3 helical transmembrane spans lie at 381 to 401, 451 to 471, and 525 to 545; these read WGIA…PLSA, FPIL…LAAV, and PVAF…YSLV. The segment at 563–622 is disordered; that stretch reads TAPSQDAPESPASKDAPELPVSNQVINDSENTEAPASGPADSPKKPVNIPRRMHKRTRKK. Polar residues predominate over residues 583–596; that stretch reads VSNQVINDSENTEA. Residues 613–622 are compositionally biased toward basic residues; the sequence is RRMHKRTRKK.

Belongs to the OXA1/ALB3/YidC family. Type 1 subfamily. Interacts with the Sec translocase complex via SecD. Specifically interacts with transmembrane segments of nascent integral membrane proteins during membrane integration.

Its subcellular location is the cell inner membrane. In terms of biological role, required for the insertion and/or proper folding and/or complex formation of integral membrane proteins into the membrane. Involved in integration of membrane proteins that insert both dependently and independently of the Sec translocase complex, as well as at least some lipoproteins. Aids folding of multispanning membrane proteins. This Nitrosomonas eutropha (strain DSM 101675 / C91 / Nm57) protein is Membrane protein insertase YidC.